The primary structure comprises 550 residues: Methyl-coenzyme M reductase I subunit alpha (550 aa).

Residue Gln-147 coordinates coenzyme F430. Coenzyme B is bound by residues Arg-225, 256 to 257 (KH), and Arg-270. Residue His-257 is modified to Pros-methylhistidine. Arg-271 carries the 5-methylarginine modification. Tyr-333 contacts coenzyme M. Gln-400 bears the 2-methylglutamine mark. Tyr-444 lines the coenzyme M pocket. Residue Gly-445 is modified to 1-thioglycine. Position 450 is a (Z)-2,3-didehydroaspartate (Asp-450). Cys-452 carries the S-methylcysteine modification.

The protein belongs to the methyl-coenzyme M reductase alpha subunit family. In terms of assembly, MCR is a hexamer of two alpha, two beta, and two gamma chains, forming a dimer of heterotrimers. Coenzyme F430 serves as cofactor. The alpha subunit contains six modified amino acids near the active site region. Is methylated on His-257, Arg-271, Gln-400 and Cys-452, probably by the action of specific S-adenosylmethionine-dependent methyltransferases. Also contains a thioglycine at position 445, forming a thiopeptide bond. Contains a didehydroaspartate residue at position 450. The methylation on C5 of Arg-271 is a post-translational methylation not essential in vivo, but which plays a role for the stability and structural integrity of MCR.

The protein resides in the cytoplasm. The catalysed reaction is coenzyme B + methyl-coenzyme M = methane + coenzyme M-coenzyme B heterodisulfide. It functions in the pathway one-carbon metabolism; methyl-coenzyme M reduction; methane from methyl-coenzyme M: step 1/1. With respect to regulation, methyl-coenzyme M reductase activity is inhibited by 3-nitrooxypropanol (3-NOP) in vitro and in vivo, by oxidation of its active site Ni(I), which stops both growth and methanogenesis. Is also inhibited by the reaction product CoM-S-S-CoB. Component of the methyl-coenzyme M reductase (MCR) I that catalyzes the reductive cleavage of methyl-coenzyme M (CoM-S-CH3 or 2-(methylthio)ethanesulfonate) using coenzyme B (CoB or 7-mercaptoheptanoylthreonine phosphate) as reductant which results in the production of methane and the mixed heterodisulfide of CoB and CoM (CoM-S-S-CoB). This is the final step in methanogenesis. Neither N-6-mercaptohexanoylthreonine phosphate (H-S-HxoTP) nor N-8-mercaptooctanoylthreonine phosphate (H-SOcoTP) nor any other thiol compound such as CoA or CoM can substitute for CoB as the electron donor. In Methanothermobacter marburgensis (strain ATCC BAA-927 / DSM 2133 / JCM 14651 / NBRC 100331 / OCM 82 / Marburg) (Methanobacterium thermoautotrophicum), this protein is Methyl-coenzyme M reductase I subunit alpha (mcrA).